Consider the following 325-residue polypeptide: MAMAVFRREGRRLLPSIAARPIAAIRSPLSSDQEEGLLGVRSISTQVVRNRMKSVKNIQKITKAMKMVAASKLRAVQGRAENSRGLWQPFTALLGDNPSIDVKKSVVVTLSSDKGLCGGINSTVVKVSRALYKLNAGPEKEVQFVIVGEKAKAIMFRDSKNDIVLSVTELNKNPLNYAQVSVLADDILKNVEFDALRIVYNKFHSVVAFLPTVSTVLSPEIIEKESEIGGKLGELDSYEIEGGETKGEILQNLAEFQFSCVMFNAVLENACSEMGARMSAMDSSSRNAGEMLDRLTLTYNRTRQASITTELIEIISGASALEAAK.

The N-terminal 42 residues, 1-42 (MAMAVFRREGRRLLPSIAARPIAAIRSPLSSDQEEGLLGVRS), are a transit peptide targeting the mitochondrion.

The protein belongs to the ATPase gamma chain family. In terms of assembly, F-type ATPases have 2 components, CF(1) - the catalytic core - and CF(0) - the membrane proton channel. CF(1) has five subunits: alpha(3), beta(3), gamma(1), delta(1), epsilon(1). CF(0) has three main subunits: a, b and c.

The protein resides in the mitochondrion. The protein localises to the mitochondrion inner membrane. In terms of biological role, mitochondrial membrane ATP synthase (F(1)F(0) ATP synthase or Complex V) produces ATP from ADP in the presence of a proton gradient across the membrane which is generated by electron transport complexes of the respiratory chain. F-type ATPases consist of two structural domains, F(1) - containing the extramembraneous catalytic core, and F(0) - containing the membrane proton channel, linked together by a central stalk and a peripheral stalk. During catalysis, ATP synthesis in the catalytic domain of F(1) is coupled via a rotary mechanism of the central stalk subunits to proton translocation. Part of the complex F(1) domain and the central stalk which is part of the complex rotary element. The gamma subunit protrudes into the catalytic domain formed of alpha(3)beta(3). Rotation of the central stalk against the surrounding alpha(3)beta(3) subunits leads to hydrolysis of ATP in three separate catalytic sites on the beta subunits. The protein is ATP synthase subunit gamma, mitochondrial (ATPC) of Arabidopsis thaliana (Mouse-ear cress).